The primary structure comprises 205 residues: GTP cyclohydrolase-2 (205 aa).

49–53 serves as a coordination point for GTP; it reads RLHSE. Residues C54, C65, and C67 each contribute to the Zn(2+) site. Residues Q70, 92–94, and T114 each bind GTP; that span reads EGR. D126 (proton acceptor) is an active-site residue. The active-site Nucleophile is the R128. T149 and K154 together coordinate GTP.

It belongs to the GTP cyclohydrolase II family. Zn(2+) is required as a cofactor.

It carries out the reaction GTP + 4 H2O = 2,5-diamino-6-hydroxy-4-(5-phosphoribosylamino)-pyrimidine + formate + 2 phosphate + 3 H(+). It participates in cofactor biosynthesis; riboflavin biosynthesis; 5-amino-6-(D-ribitylamino)uracil from GTP: step 1/4. Its function is as follows. Catalyzes the conversion of GTP to 2,5-diamino-6-ribosylamino-4(3H)-pyrimidinone 5'-phosphate (DARP), formate and pyrophosphate. This is GTP cyclohydrolase-2 from Pseudomonas putida (strain ATCC 700007 / DSM 6899 / JCM 31910 / BCRC 17059 / LMG 24140 / F1).